The sequence spans 244 residues: MSKLDLNALNELPKVDRVLALAETNAQLETLTAEERVAWALENLPGEYVLSSSFGIQAAVSLHLVNQIRPDIPVILTDTGYLFPETYQFIDELTDKLKLNLKVYRAGESPAWQEARYGKLWEQGVEGIEKYNEINKVEPMNRALKELKAQTWFAGLRREQSGSRAHLPVLAIQRGVFKVLPIIDWDNRTVYQYLQKHGLKYHPLWDQGYLSVGDTHTTRKWEPGMAEEETRFFGLKRECGLHEG.

Catalysis depends on cysteine 239, which acts as the Nucleophile; cysteine thiosulfonate intermediate.

This sequence belongs to the PAPS reductase family. CysH subfamily.

The protein resides in the cytoplasm. The catalysed reaction is [thioredoxin]-disulfide + sulfite + adenosine 3',5'-bisphosphate + 2 H(+) = [thioredoxin]-dithiol + 3'-phosphoadenylyl sulfate. Its pathway is sulfur metabolism; hydrogen sulfide biosynthesis; sulfite from sulfate: step 3/3. In terms of biological role, catalyzes the formation of sulfite from phosphoadenosine 5'-phosphosulfate (PAPS) using thioredoxin as an electron donor. This is Phosphoadenosine 5'-phosphosulfate reductase from Salmonella dublin (strain CT_02021853).